The sequence spans 143 residues: Transcriptional regulator MraZ (143 aa).

SpoVT-AbrB domains lie at 5-47 (THHP…PRAE) and 76-119 (TDEQ…NAER).

This sequence belongs to the MraZ family. In terms of assembly, forms oligomers.

The protein localises to the cytoplasm. Its subcellular location is the nucleoid. The sequence is that of Transcriptional regulator MraZ from Saccharopolyspora erythraea (strain ATCC 11635 / DSM 40517 / JCM 4748 / NBRC 13426 / NCIMB 8594 / NRRL 2338).